Consider the following 366-residue polypeptide: Beta sliding clamp (366 aa).

It belongs to the beta sliding clamp family. As to quaternary structure, forms a ring-shaped head-to-tail homodimer around DNA which binds and tethers DNA polymerases and other proteins to the DNA. The DNA replisome complex has a single clamp-loading complex (3 tau and 1 each of delta, delta', psi and chi subunits) which binds 3 Pol III cores (1 core on the leading strand and 2 on the lagging strand) each with a beta sliding clamp dimer. Additional proteins in the replisome are other copies of gamma, psi and chi, Ssb, DNA helicase and RNA primase.

The protein localises to the cytoplasm. In terms of biological role, confers DNA tethering and processivity to DNA polymerases and other proteins. Acts as a clamp, forming a ring around DNA (a reaction catalyzed by the clamp-loading complex) which diffuses in an ATP-independent manner freely and bidirectionally along dsDNA. Initially characterized for its ability to contact the catalytic subunit of DNA polymerase III (Pol III), a complex, multichain enzyme responsible for most of the replicative synthesis in bacteria; Pol III exhibits 3'-5' exonuclease proofreading activity. The beta chain is required for initiation of replication as well as for processivity of DNA replication. The polypeptide is Beta sliding clamp (dnaN) (Haemophilus influenzae (strain ATCC 51907 / DSM 11121 / KW20 / Rd)).